Here is a 238-residue protein sequence, read N- to C-terminus: 4-hydroxy-tetrahydrodipicolinate reductase (238 aa).

12–17 (GASGRM) is a binding site for NAD(+). NADP(+) is bound at residue arginine 40. NAD(+) is bound by residues 93 to 95 (GTT) and 117 to 120 (ASNF). The active-site Proton donor/acceptor is histidine 149. Histidine 150 is a (S)-2,3,4,5-tetrahydrodipicolinate binding site. Lysine 153 (proton donor) is an active-site residue. 159–160 (GT) is a binding site for (S)-2,3,4,5-tetrahydrodipicolinate.

The protein belongs to the DapB family.

The protein resides in the cytoplasm. It catalyses the reaction (S)-2,3,4,5-tetrahydrodipicolinate + NAD(+) + H2O = (2S,4S)-4-hydroxy-2,3,4,5-tetrahydrodipicolinate + NADH + H(+). The enzyme catalyses (S)-2,3,4,5-tetrahydrodipicolinate + NADP(+) + H2O = (2S,4S)-4-hydroxy-2,3,4,5-tetrahydrodipicolinate + NADPH + H(+). The protein operates within amino-acid biosynthesis; L-lysine biosynthesis via DAP pathway; (S)-tetrahydrodipicolinate from L-aspartate: step 4/4. Catalyzes the conversion of 4-hydroxy-tetrahydrodipicolinate (HTPA) to tetrahydrodipicolinate. This is 4-hydroxy-tetrahydrodipicolinate reductase from Xanthomonas euvesicatoria pv. vesicatoria (strain 85-10) (Xanthomonas campestris pv. vesicatoria).